A 460-amino-acid chain; its full sequence is Chromosomal replication initiator protein DnaA (460 aa).

The tract at residues 1–84 is domain I, interacts with DnaA modulators; it reads MAVSLWQQCI…RFDIGSRPSA (84 aa). Residues 84 to 123 are domain II; that stretch reads AKKPEPAPVAAVRVPNPQTKASVGTSFNTTEPVANTNHRS. The segment at 103 to 123 is disordered; sequence KASVGTSFNTTEPVANTNHRS. The segment at 124–340 is domain III, AAA+ region; it reads NINPTYQFDN…GALNRVIANA (217 aa). The ATP site is built by Gly-168, Gly-170, Lys-171, and Thr-172. The interval 341 to 460 is domain IV, binds dsDNA; sequence NFTGRPITID…YANLIRTLSS (120 aa).

It belongs to the DnaA family. Oligomerizes as a right-handed, spiral filament on DNA at oriC.

The protein resides in the cytoplasm. Functionally, plays an essential role in the initiation and regulation of chromosomal replication. ATP-DnaA binds to the origin of replication (oriC) to initiate formation of the DNA replication initiation complex once per cell cycle. Binds the DnaA box (a 9 base pair repeat at the origin) and separates the double-stranded (ds)DNA. Forms a right-handed helical filament on oriC DNA; dsDNA binds to the exterior of the filament while single-stranded (ss)DNA is stabiized in the filament's interior. The ATP-DnaA-oriC complex binds and stabilizes one strand of the AT-rich DNA unwinding element (DUE), permitting loading of DNA polymerase. After initiation quickly degrades to an ADP-DnaA complex that is not apt for DNA replication. Binds acidic phospholipids. In Shewanella sp. (strain MR-4), this protein is Chromosomal replication initiator protein DnaA.